Consider the following 240-residue polypeptide: Ribonuclease PH (240 aa).

Phosphate is bound by residues R87 and 125-127 (GTR).

The protein belongs to the RNase PH family. Homohexameric ring arranged as a trimer of dimers.

It carries out the reaction tRNA(n+1) + phosphate = tRNA(n) + a ribonucleoside 5'-diphosphate. Phosphorolytic 3'-5' exoribonuclease that plays an important role in tRNA 3'-end maturation. Removes nucleotide residues following the 3'-CCA terminus of tRNAs; can also add nucleotides to the ends of RNA molecules by using nucleoside diphosphates as substrates, but this may not be physiologically important. Probably plays a role in initiation of 16S rRNA degradation (leading to ribosome degradation) during starvation. In Crocosphaera subtropica (strain ATCC 51142 / BH68) (Cyanothece sp. (strain ATCC 51142)), this protein is Ribonuclease PH.